The primary structure comprises 1173 residues: WASH complex subunit 4 (1173 aa).

A2 carries the N-acetylalanine modification. S7 is subject to Phosphoserine. A coiled-coil region spans residues 27-56 (QLKNYGRFLEEYTSQLRRIEDALDDLIGDV). Residues 705–1173 (KDLALFFSLN…STVSADPVVK (469 aa)) are sufficient for interaction with WASHC5. Basic and acidic residues predominate over residues 1141 to 1155 (AEENQEKKEKEEETK). A disordered region spans residues 1141–1173 (AEENQEKKEKEEETKTSNGDGPESTVSADPVVK). A Phosphothreonine modification is found at T1154.

This sequence belongs to the SWIP family. In terms of assembly, component of the WASH core complex also described as WASH regulatory complex (SHRC) composed of WASH (WASHC1, WASH2P or WASH3P), WASHC2 (WASHC2A or WASHC2C), WASHC3, WASHC4 and WASHC5. The WASH core complex associates via WASHC2 with the F-actin-capping protein dimer (formed by CAPZA1, CAPZA2 or CAPZA3 and CAPZB) in a transient or substoichiometric manner which was initially described as WASH complex.

Its subcellular location is the early endosome. Its function is as follows. Acts as a component of the WASH core complex that functions as a nucleation-promoting factor (NPF) at the surface of endosomes, where it recruits and activates the Arp2/3 complex to induce actin polymerization, playing a key role in the fission of tubules that serve as transport intermediates during endosome sorting. In Mus musculus (Mouse), this protein is WASH complex subunit 4.